A 443-amino-acid polypeptide reads, in one-letter code: Thymidine phosphorylase (443 aa).

This sequence belongs to the thymidine/pyrimidine-nucleoside phosphorylase family. As to quaternary structure, homodimer.

It catalyses the reaction thymidine + phosphate = 2-deoxy-alpha-D-ribose 1-phosphate + thymine. The protein operates within pyrimidine metabolism; dTMP biosynthesis via salvage pathway; dTMP from thymine: step 1/2. The enzymes which catalyze the reversible phosphorolysis of pyrimidine nucleosides are involved in the degradation of these compounds and in their utilization as carbon and energy sources, or in the rescue of pyrimidine bases for nucleotide synthesis. The protein is Thymidine phosphorylase of Aeromonas hydrophila subsp. hydrophila (strain ATCC 7966 / DSM 30187 / BCRC 13018 / CCUG 14551 / JCM 1027 / KCTC 2358 / NCIMB 9240 / NCTC 8049).